Consider the following 478-residue polypeptide: Phosphatidylinositol 4-kinase type 2-alpha (478 aa).

Methionine 1 is modified (N-acetylmethionine). Residues methionine 1–arginine 57 form a disordered region. Residues serine 5, serine 9, serine 43, serine 46, and serine 50 each carry the phosphoserine modification. Over residues valine 31–glycine 44 the composition is skewed to low complexity. The PI3K/PI4K catalytic domain occupies serine 123 to threonine 452. The tract at residues isoleucine 129–glycine 135 is G-loop. ATP contacts are provided by residues tyrosine 130–serine 136 and lysine 151. The important for substrate binding stretch occupies residues glutamate 156–tyrosine 158. The interval lysine 164–cysteine 177 is important for interaction with membranes. 4 S-palmitoyl cysteine lipidation sites follow: cysteine 173, cysteine 174, cysteine 176, and cysteine 177. Glutamine 260 to valine 263 contacts ATP. The important for interaction with membranes stretch occupies residues lysine 267–arginine 275. The segment at arginine 304–asparagine 312 is catalytic loop. Positions alanine 343–phenylalanine 363 are activation loop. Aspartate 345 contacts ATP. The interval tryptophan 358–tryptophan 367 is important for interaction with membranes. Serine 461 carries the post-translational modification Phosphoserine.

Belongs to the PI3/PI4-kinase family. Type II PI4K subfamily. Associates with the BLOC-1 and the AP-3 complexes; the BLOC-1 complex is required for optimal binding of PI4K2A to the AP-3 complex. Interacts with BLOC1S5 and DTNBP1. Interacts with FOS; this interaction may enhance phosphatidylinositol phosphorylation activity. Interacts with ITCH. Interacts with ATG9A. In terms of processing, ubiquitinated by ITCH; this does not lead to proteasomal degradation. Post-translationally, palmitoylated. Palmitoylated by ZDHHC3 and ZDHHC7 in the CCPCC motif. Palmitoylation is cholesterol-dependent, and required for TGN localization. In terms of tissue distribution, detected in adult brain, especially in neurons in the cerebellum, brain cortex, dorsal root ganglion and spinal cord (at protein level).

It localises to the golgi apparatus. The protein localises to the trans-Golgi network membrane. It is found in the membrane raft. Its subcellular location is the endosome. The protein resides in the endosome membrane. It localises to the cytoplasmic vesicle. The protein localises to the cell projection. It is found in the dendrite. Its subcellular location is the presynaptic cell membrane. The protein resides in the synapse. It localises to the synaptosome. The protein localises to the mitochondrion. It is found in the membrane. Its subcellular location is the cell membrane. The protein resides in the perikaryon. It localises to the neuron projection. It catalyses the reaction a 1,2-diacyl-sn-glycero-3-phospho-(1D-myo-inositol) + ATP = a 1,2-diacyl-sn-glycero-3-phospho-(1D-myo-inositol 4-phosphate) + ADP + H(+). Membrane-bound phosphatidylinositol-4 kinase (PI4-kinase) that catalyzes the phosphorylation of phosphatidylinositol (PI) to phosphatidylinositol 4-phosphate (PI4P), a lipid that plays important roles in endocytosis, Golgi function, protein sorting and membrane trafficking and is required for prolonged survival of neurons. Besides, phosphorylation of phosphatidylinositol (PI) to phosphatidylinositol 4-phosphate (PI4P) is the first committed step in the generation of phosphatidylinositol 4,5-bisphosphate (PIP2), a precursor of the second messenger inositol 1,4,5-trisphosphate (InsP3). The polypeptide is Phosphatidylinositol 4-kinase type 2-alpha (Pi4k2a) (Rattus norvegicus (Rat)).